Reading from the N-terminus, the 419-residue chain is N-acylglucosamine 2-epimerase (419 aa).

The interval 185–206 (LLNLVEQLGEEDEEMTDKYAEL) is leucine-zipper. Position 418 is a phosphoserine (Ser-418).

It belongs to the N-acylglucosamine 2-epimerase family. In terms of assembly, homodimer. Forms a heterodimer with renin and inhibits its activity. Kidney, adrenal gland, brain, lung, spleen, ovary, testis and heart.

It catalyses the reaction an N-acyl-D-glucosamine = an N-acyl-D-mannosamine. The protein operates within amino-sugar metabolism; N-acetylneuraminate degradation. Its function is as follows. Catalyzes the interconversion of N-acetylglucosamine to N-acetylmannosamine. Involved in the N-glycolylneuraminic acid (Neu5Gc) degradation pathway. The chain is N-acylglucosamine 2-epimerase (Renbp) from Rattus norvegicus (Rat).